Here is a 428-residue protein sequence, read N- to C-terminus: Gamma-glutamyl phosphate reductase (428 aa).

The protein belongs to the gamma-glutamyl phosphate reductase family.

The protein localises to the cytoplasm. The catalysed reaction is L-glutamate 5-semialdehyde + phosphate + NADP(+) = L-glutamyl 5-phosphate + NADPH + H(+). Its pathway is amino-acid biosynthesis; L-proline biosynthesis; L-glutamate 5-semialdehyde from L-glutamate: step 2/2. Catalyzes the NADPH-dependent reduction of L-glutamate 5-phosphate into L-glutamate 5-semialdehyde and phosphate. The product spontaneously undergoes cyclization to form 1-pyrroline-5-carboxylate. This Chelativorans sp. (strain BNC1) protein is Gamma-glutamyl phosphate reductase.